A 272-amino-acid chain; its full sequence is Undecaprenyl-diphosphatase (272 aa).

Transmembrane regions (helical) follow at residues serine 6–serine 26, alanine 45–tryptophan 65, leucine 89–histidine 109, leucine 115–alanine 135, alanine 156–alanine 176, tyrosine 189–leucine 209, alanine 221–isoleucine 241, and isoleucine 251–phenylalanine 271.

It belongs to the UppP family.

Its subcellular location is the cell inner membrane. The enzyme catalyses di-trans,octa-cis-undecaprenyl diphosphate + H2O = di-trans,octa-cis-undecaprenyl phosphate + phosphate + H(+). Catalyzes the dephosphorylation of undecaprenyl diphosphate (UPP). Confers resistance to bacitracin. This is Undecaprenyl-diphosphatase from Cronobacter sakazakii (strain ATCC BAA-894) (Enterobacter sakazakii).